The sequence spans 472 residues: Chitobiosyldiphosphodolichol beta-mannosyltransferase (472 aa).

The Lumenal portion of the chain corresponds to 1–20; it reads MEEFQFIKYKGFDHVFKYSG. Residues 21-41 form a helical membrane-spanning segment; sequence PWLWWLVGFYLCLPILAYTLL. The Cytoplasmic segment spans residues 42–118; that stretch reads PYLTMNGTIS…PITVTKNTSN (77 aa). Residues 119 to 139 constitute an intramembrane region (helical); that stretch reads LPFILFAAKKMVVQFFQLLKL. The Cytoplasmic portion of the chain corresponds to 140–472; sequence LSDFRGTDYV…MGKRFEYSTD (333 aa).

The protein belongs to the glycosyltransferase group 1 family.

It is found in the endoplasmic reticulum membrane. The enzyme catalyses an N,N'-diacetylchitobiosyl-diphospho-di-trans,poly-cis-dolichol + GDP-alpha-D-mannose = a beta-D-Man-(1-&gt;4)-beta-D-GlcNAc-(1-&gt;4)-alpha-D-GlcNAc-diphospho-di-trans,poly-cis-dolichol + GDP + H(+). The protein operates within protein modification; protein glycosylation. In terms of biological role, participates in the formation of the lipid-linked precursor oligosaccharide for N-glycosylation. Involved in assembling the dolichol-pyrophosphate-GlcNAc(2)-Man(5) intermediate on the cytoplasmic surface of the ER. This Debaryomyces hansenii (strain ATCC 36239 / CBS 767 / BCRC 21394 / JCM 1990 / NBRC 0083 / IGC 2968) (Yeast) protein is Chitobiosyldiphosphodolichol beta-mannosyltransferase (ALG1).